Reading from the N-terminus, the 505-residue chain is Bifunctional pantoate ligase/cytidylate kinase (505 aa).

A pantoate--beta-alanine ligase region spans residues 1-268; that stretch reads MHQWRKHQQS…CGETRLIDHT (268 aa). ATP is bound at residue 18–25; it reads MGALHRGH. The Proton donor role is filled by His25. Gln53 is a (R)-pantoate binding site. Gln53 provides a ligand contact to beta-alanine. Residue 142-145 participates in ATP binding; the sequence is GEKD. Residue Gln148 coordinates (R)-pantoate. Residues Val171 and 179 to 182 contribute to the ATP site; that span reads CSSR. The interval 269–505 is cytidylate kinase; the sequence is FLMSRQPIVA…PEEVWPTAGR (237 aa).

It in the N-terminal section; belongs to the pantothenate synthetase family. In the C-terminal section; belongs to the cytidylate kinase family. Type 1 subfamily.

Its subcellular location is the cytoplasm. The catalysed reaction is (R)-pantoate + beta-alanine + ATP = (R)-pantothenate + AMP + diphosphate + H(+). The enzyme catalyses CMP + ATP = CDP + ADP. It catalyses the reaction dCMP + ATP = dCDP + ADP. The protein operates within cofactor biosynthesis; (R)-pantothenate biosynthesis; (R)-pantothenate from (R)-pantoate and beta-alanine: step 1/1. Its function is as follows. Catalyzes the condensation of pantoate with beta-alanine in an ATP-dependent reaction via a pantoyl-adenylate intermediate. Functionally, catalyzes the transfer of a phosphate group from ATP to either CMP or dCMP to form CDP or dCDP and ADP, respectively. The sequence is that of Bifunctional pantoate ligase/cytidylate kinase from Prochlorococcus marinus (strain MIT 9313).